A 27-amino-acid chain; its full sequence is RSCCPCYWGGCPWGQNCYPEGCSGPKV.

Disulfide bonds link Cys3–Cys17, Cys4–Cys11, and Cys6–Cys22.

The protein belongs to the sea anemone short toxin (type III) family.

The protein localises to the secreted. Its subcellular location is the nematocyst. Its function is as follows. Specific arthropod (crab and insect) toxin that inhibits inactivation of voltage-gated sodium channels. It competes well with the site-3 toxin LqhalphaIT (from the scorpion L.quinquestriatus (AC P17728)) on binding to cockroach neuronal membranes (Ki=21.4 nM), and inhibits the inactivation of D.melanogaster channel (DmNav1), but not that of mammalian Navs expressed in Xenopus oocytes. Its activity is synergically enhanced by ligands of receptor site-4 (Bj-xtrIT (AC P56637)). Its ability to inhibit the channel mutant DmNav1[D1701R] only decreases 5-fold, whereas the inhibition activity is completely lost by LqhalphaIT and Av2 when tested on DmNav1[D1701R]. This Anemonia sulcata (Mediterranean snakelocks sea anemone) protein is Delta-actitoxin-Avd2a.